We begin with the raw amino-acid sequence, 387 residues long: Probable protein phosphatase 2C 25 (387 aa).

In terms of domain architecture, PPM-type phosphatase spans 52 to 351; it reads EFSFAVVQAN…DDITVVVVYI (300 aa). Mn(2+) contacts are provided by Asp-83, Gly-84, Asp-283, and Asp-342.

The protein belongs to the PP2C family. Requires Mg(2+) as cofactor. Mn(2+) is required as a cofactor.

It carries out the reaction O-phospho-L-seryl-[protein] + H2O = L-seryl-[protein] + phosphate. The enzyme catalyses O-phospho-L-threonyl-[protein] + H2O = L-threonyl-[protein] + phosphate. This Oryza sativa subsp. japonica (Rice) protein is Probable protein phosphatase 2C 25.